The following is a 222-amino-acid chain: 7-cyano-7-deazaguanine synthase (222 aa).

Residue 8-18 (LSGGMDSTTLA) coordinates ATP. 4 residues coordinate Zn(2+): Cys188, Cys196, Cys199, and Cys202.

This sequence belongs to the QueC family. The cofactor is Zn(2+).

The enzyme catalyses 7-carboxy-7-deazaguanine + NH4(+) + ATP = 7-cyano-7-deazaguanine + ADP + phosphate + H2O + H(+). Its pathway is purine metabolism; 7-cyano-7-deazaguanine biosynthesis. Catalyzes the ATP-dependent conversion of 7-carboxy-7-deazaguanine (CDG) to 7-cyano-7-deazaguanine (preQ(0)). In Methanoculleus marisnigri (strain ATCC 35101 / DSM 1498 / JR1), this protein is 7-cyano-7-deazaguanine synthase.